The primary structure comprises 164 residues: Large ribosomal subunit protein uL11 (164 aa).

Belongs to the universal ribosomal protein uL11 family. Part of the ribosomal stalk of the 50S ribosomal subunit. Interacts with L10 and the large rRNA to form the base of the stalk. L10 forms an elongated spine to which L12 dimers bind in a sequential fashion forming a multimeric L10(L12)X complex.

Its function is as follows. Forms part of the ribosomal stalk which helps the ribosome interact with GTP-bound translation factors. This chain is Large ribosomal subunit protein uL11, found in Pyrococcus abyssi (strain GE5 / Orsay).